Here is a 264-residue protein sequence, read N- to C-terminus: Undecaprenyl-diphosphatase (264 aa).

7 consecutive transmembrane segments (helical) span residues 34–54, 75–95, 104–124, 137–157, 180–200, 207–227, and 243–263; these read LLNL…MGSI, LLYL…LYII, YDPS…GLYI, LSLK…LPGV, YSYL…ILFS, VISL…FIIG, and IYII…LTIL.

It belongs to the UppP family.

The protein resides in the cell membrane. It carries out the reaction di-trans,octa-cis-undecaprenyl diphosphate + H2O = di-trans,octa-cis-undecaprenyl phosphate + phosphate + H(+). Catalyzes the dephosphorylation of undecaprenyl diphosphate (UPP). The protein is Undecaprenyl-diphosphatase of Sulfurisphaera tokodaii (strain DSM 16993 / JCM 10545 / NBRC 100140 / 7) (Sulfolobus tokodaii).